The sequence spans 479 residues: Transcript termination protein A18 (479 aa).

In terms of domain architecture, Helicase ATP-binding spans 99 to 255; the sequence is KNKHKRPTYI…NDIINVSNSL (157 aa). An ATP-binding site is contributed by 112–119; the sequence is LACGFGKT. A DESH box motif is present at residues 205–208; the sequence is DESH. The region spanning 308–469 is the Helicase C-terminal domain; that stretch reads ILDTIIYDFN…EKKGKKKELA (162 aa).

The protein belongs to the helicase family. Poxviruses subfamily. As to quaternary structure, interacts with G2. Might be part of a transcription complex composed at least of G2, A18, and H5.

It is found in the virion. DNA helicase which seems to act as a postreplicative transcription termination factor. Involved in ATP-dependent release of nascent RNA. Forms a stable complex with single-stranded DNA, and to a lesser extent RNA. This is Transcript termination protein A18 from Homo sapiens (Human).